The sequence spans 155 residues: Peptide deformylase (155 aa).

2 residues coordinate Fe cation: cysteine 88 and histidine 130. Glutamate 131 is a catalytic residue. Fe cation is bound at residue histidine 134.

This sequence belongs to the polypeptide deformylase family. It depends on Fe(2+) as a cofactor.

It carries out the reaction N-terminal N-formyl-L-methionyl-[peptide] + H2O = N-terminal L-methionyl-[peptide] + formate. Functionally, removes the formyl group from the N-terminal Met of newly synthesized proteins. Requires at least a dipeptide for an efficient rate of reaction. N-terminal L-methionine is a prerequisite for activity but the enzyme has broad specificity at other positions. This is Peptide deformylase from Pelotomaculum thermopropionicum (strain DSM 13744 / JCM 10971 / SI).